Consider the following 503-residue polypeptide: ATP-dependent RNA helicase dbp3 (503 aa).

Residues 1 to 13 (MGKRVSHNEGADR) are compositionally biased toward basic and acidic residues. The tract at residues 1–37 (MGKRVSHNEGADRRPKKKAKNEKPEKETMESPAADVT) is disordered. The Q motif motif lies at 104-112 (SFASPTPIQ). In terms of domain architecture, Helicase ATP-binding spans 116–292 (WPLLFAGRDV…ATFMTSAVTV (177 aa)). 129 to 136 (AETGSGKT) contacts ATP. The DEAD box signature appears at 239–242 (DEAD). The 150-residue stretch at 323 to 472 (RLVQLLSENQ…EVPQELLKFG (150 aa)) folds into the Helicase C-terminal domain.

It belongs to the DEAD box helicase family. DDX5/DBP2 subfamily.

It localises to the nucleus. It is found in the nucleolus. The enzyme catalyses ATP + H2O = ADP + phosphate + H(+). ATP-dependent RNA helicase required for 60S ribosomal subunit synthesis. Involved in efficient pre-rRNA processing, predominantly at site A3, which is necessary for the normal formation of 25S and 5.8S rRNAs. The protein is ATP-dependent RNA helicase dbp3 (dbp3) of Aspergillus clavatus (strain ATCC 1007 / CBS 513.65 / DSM 816 / NCTC 3887 / NRRL 1 / QM 1276 / 107).